A 214-amino-acid chain; its full sequence is Adenylate kinase (214 aa).

10-15 (GAGKGT) contacts ATP. The segment at 30 to 59 (STGDMLRAAIKAGTELGLKAKAVMDAGQLV) is NMP. Residues Thr-31, Arg-36, 57-59 (QLV), 85-88 (GFPR), and Gln-92 contribute to the AMP site. Residues 122–159 (GRRVHSGSGRTYHVVFNPPKVEGKDDVTGEDLVIRADD) are LID. Residues Arg-123 and 132 to 133 (TY) each bind ATP. The AMP site is built by Arg-156 and Arg-167. Gln-200 serves as a coordination point for ATP.

It belongs to the adenylate kinase family. In terms of assembly, monomer.

It localises to the cytoplasm. It carries out the reaction AMP + ATP = 2 ADP. The protein operates within purine metabolism; AMP biosynthesis via salvage pathway; AMP from ADP: step 1/1. Catalyzes the reversible transfer of the terminal phosphate group between ATP and AMP. Plays an important role in cellular energy homeostasis and in adenine nucleotide metabolism. This Aeromonas hydrophila subsp. hydrophila (strain ATCC 7966 / DSM 30187 / BCRC 13018 / CCUG 14551 / JCM 1027 / KCTC 2358 / NCIMB 9240 / NCTC 8049) protein is Adenylate kinase.